Reading from the N-terminus, the 305-residue chain is Superoxide dismutase [Fe] 2, chloroplastic (305 aa).

Residues 1 to 46 (MMNVAVTATPSSLLYSPLLLPSQGPNRRMQWKRNGKRRLGTKVAVS) constitute a chloroplast transit peptide. Fe cation contacts are provided by His77, His129, Asp228, and His232. Residues 270–305 (AVQREQEGTETEDEENPDDEVPEVYLDSDIDVSEVD) are disordered. The segment covering 277-305 (GTETEDEENPDDEVPEVYLDSDIDVSEVD) has biased composition (acidic residues).

Belongs to the iron/manganese superoxide dismutase family. Heterodimer with FSD3. Interacts with MRL7 and PRDA1. Fe cation is required as a cofactor.

The protein localises to the plastid. Its subcellular location is the chloroplast thylakoid. It catalyses the reaction 2 superoxide + 2 H(+) = H2O2 + O2. With respect to regulation, activated by cpn20/cpn21 (in vitro). Destroys superoxide anion radicals which are normally produced within the cells and which are toxic to biological systems. Plays important role in chloroplast development, particularly in the maintenance of thylakoids membranes. Seems to act as a heterodimer with FSD3. The chain is Superoxide dismutase [Fe] 2, chloroplastic (FSD2) from Arabidopsis thaliana (Mouse-ear cress).